The primary structure comprises 140 residues: Large ribosomal subunit protein uL14 (140 aa).

Belongs to the universal ribosomal protein uL14 family.

The protein is Large ribosomal subunit protein uL14 (rpl-23) of Caenorhabditis elegans.